A 434-amino-acid chain; its full sequence is 3-phosphoshikimate 1-carboxyvinyltransferase (434 aa).

K22, S23, and R27 together coordinate 3-phosphoshikimate. K22 contacts phosphoenolpyruvate. Phosphoenolpyruvate contacts are provided by G93 and R121. S168, S169, Q170, S199, D320, and K347 together coordinate 3-phosphoshikimate. Q170 is a phosphoenolpyruvate binding site. D320 (proton acceptor) is an active-site residue. The phosphoenolpyruvate site is built by R351, R395, and K420.

It belongs to the EPSP synthase family. As to quaternary structure, monomer.

It is found in the cytoplasm. The enzyme catalyses 3-phosphoshikimate + phosphoenolpyruvate = 5-O-(1-carboxyvinyl)-3-phosphoshikimate + phosphate. Its pathway is metabolic intermediate biosynthesis; chorismate biosynthesis; chorismate from D-erythrose 4-phosphate and phosphoenolpyruvate: step 6/7. Its function is as follows. Catalyzes the transfer of the enolpyruvyl moiety of phosphoenolpyruvate (PEP) to the 5-hydroxyl of shikimate-3-phosphate (S3P) to produce enolpyruvyl shikimate-3-phosphate and inorganic phosphate. The chain is 3-phosphoshikimate 1-carboxyvinyltransferase from Cupriavidus taiwanensis (strain DSM 17343 / BCRC 17206 / CCUG 44338 / CIP 107171 / LMG 19424 / R1) (Ralstonia taiwanensis (strain LMG 19424)).